Consider the following 138-residue polypeptide: Mu-like prophage FluMu G protein 2 (138 aa).

The protein to phage Mu protein G.

This Haemophilus influenzae (strain ATCC 51907 / DSM 11121 / KW20 / Rd) protein is Mu-like prophage FluMu G protein 2.